The following is a 64-amino-acid chain: Large ribosomal subunit protein uL30 (64 aa).

The segment at 1-22 is disordered; sequence MAKAAKTIKVEQTRSAIRRQHS.

The protein belongs to the universal ribosomal protein uL30 family. In terms of assembly, part of the 50S ribosomal subunit.

This is Large ribosomal subunit protein uL30 from Nitrobacter hamburgensis (strain DSM 10229 / NCIMB 13809 / X14).